The sequence spans 87 residues: Small ribosomal subunit protein bS20 (87 aa).

Belongs to the bacterial ribosomal protein bS20 family.

Binds directly to 16S ribosomal RNA. The polypeptide is Small ribosomal subunit protein bS20 (Halothermothrix orenii (strain H 168 / OCM 544 / DSM 9562)).